The chain runs to 715 residues: Polyribonucleotide nucleotidyltransferase (715 aa).

Residues D493 and D499 each contribute to the Mg(2+) site. One can recognise a KH domain in the interval 560-619 (PRMITIKINPEKIRDVIGKGGSVIRALTEETGTTIDISDDGVVTIASTSSEGMAEAKKRI). The 69-residue stretch at 629-697 (GQVYEGTVLK…EKGRVRLSAK (69 aa)) folds into the S1 motif domain.

This sequence belongs to the polyribonucleotide nucleotidyltransferase family. Requires Mg(2+) as cofactor.

The protein localises to the cytoplasm. The catalysed reaction is RNA(n+1) + phosphate = RNA(n) + a ribonucleoside 5'-diphosphate. Functionally, involved in mRNA degradation. Catalyzes the phosphorolysis of single-stranded polyribonucleotides processively in the 3'- to 5'-direction. The polypeptide is Polyribonucleotide nucleotidyltransferase (Burkholderia vietnamiensis (strain G4 / LMG 22486) (Burkholderia cepacia (strain R1808))).